A 272-amino-acid polypeptide reads, in one-letter code: Indole-3-glycerol phosphate synthase (272 aa).

Belongs to the TrpC family.

The catalysed reaction is 1-(2-carboxyphenylamino)-1-deoxy-D-ribulose 5-phosphate + H(+) = (1S,2R)-1-C-(indol-3-yl)glycerol 3-phosphate + CO2 + H2O. Its pathway is amino-acid biosynthesis; L-tryptophan biosynthesis; L-tryptophan from chorismate: step 4/5. This is Indole-3-glycerol phosphate synthase from Mycolicibacterium paratuberculosis (strain ATCC BAA-968 / K-10) (Mycobacterium paratuberculosis).